Here is a 228-residue protein sequence, read N- to C-terminus: MTQDELKALVAQAAADYVLANVPEGAVLGVGTGSTANLFIDAMAPHKARFAGAVSSSEASTRRLQGHGFTVLDLNEVDAIPVYVDGADEIDASGAMIKGGGGALTREKIVASVASVFVCIADGSKLVETMGAFPLPVEVVPMARAAVARQLAALGGQPRLRMTKEGQIYKTDNGNVIIDVVGLRIADPKGLESVVNEIPGVVTVGLFAKRGANVLLLGTEAGVQRRDF.

Substrate-binding positions include 32–35 (TGST), 85–88 (DGAD), and 98–101 (KGGG). Glutamate 107 functions as the Proton acceptor in the catalytic mechanism. Residue lysine 125 coordinates substrate.

Belongs to the ribose 5-phosphate isomerase family. In terms of assembly, homodimer.

It catalyses the reaction aldehydo-D-ribose 5-phosphate = D-ribulose 5-phosphate. It functions in the pathway carbohydrate degradation; pentose phosphate pathway; D-ribose 5-phosphate from D-ribulose 5-phosphate (non-oxidative stage): step 1/1. Functionally, catalyzes the reversible conversion of ribose-5-phosphate to ribulose 5-phosphate. This is Ribose-5-phosphate isomerase A from Ralstonia pickettii (strain 12J).